Consider the following 790-residue polypeptide: LPS-assembly protein LptD (790 aa).

Residues 1–20 form the signal peptide; sequence MRMLRWLILSAFSVAGAVQA.

It belongs to the LptD family. In terms of assembly, component of the lipopolysaccharide transport and assembly complex. Interacts with LptE and LptA.

The protein localises to the cell outer membrane. Together with LptE, is involved in the assembly of lipopolysaccharide (LPS) at the surface of the outer membrane. This chain is LPS-assembly protein LptD, found in Bordetella parapertussis (strain 12822 / ATCC BAA-587 / NCTC 13253).